The primary structure comprises 91 residues: UPF0250 protein PSPTO_4820 (91 aa).

It belongs to the UPF0250 family.

This is UPF0250 protein PSPTO_4820 from Pseudomonas syringae pv. tomato (strain ATCC BAA-871 / DC3000).